Here is a 329-residue protein sequence, read N- to C-terminus: Acetyl-coenzyme A carboxylase carboxyl transferase subunit alpha (329 aa).

In terms of domain architecture, CoA carboxyltransferase C-terminal spans 40–294 (QLETLAARRR…REALERNLSE (255 aa)).

The protein belongs to the AccA family. Acetyl-CoA carboxylase is a heterohexamer composed of biotin carboxyl carrier protein (AccB), biotin carboxylase (AccC) and two subunits each of ACCase subunit alpha (AccA) and ACCase subunit beta (AccD).

It is found in the cytoplasm. The enzyme catalyses N(6)-carboxybiotinyl-L-lysyl-[protein] + acetyl-CoA = N(6)-biotinyl-L-lysyl-[protein] + malonyl-CoA. It functions in the pathway lipid metabolism; malonyl-CoA biosynthesis; malonyl-CoA from acetyl-CoA: step 1/1. Functionally, component of the acetyl coenzyme A carboxylase (ACC) complex. First, biotin carboxylase catalyzes the carboxylation of biotin on its carrier protein (BCCP) and then the CO(2) group is transferred by the carboxyltransferase to acetyl-CoA to form malonyl-CoA. The polypeptide is Acetyl-coenzyme A carboxylase carboxyl transferase subunit alpha (Synechococcus sp. (strain CC9311)).